The following is a 420-amino-acid chain: Protein disulfide isomerase CRELD1 (420 aa).

An N-terminal signal peptide occupies residues 1–29 (MAPWPPKGLVPAMLWGLSLFLNLPGPIWL). Over 30–362 (QPSPPPQSSP…GFFSEMTEDE (333 aa)) the chain is Extracellular. The CXXC motif lies at 46–49 (CHTC). C46 and C49 are joined by a disulfide. N-linked (GlcNAc...) asparagine glycosylation is present at N79. Residues 153 to 193 (LPCPGGTERPCGGYGQCEGEGTRGGSGHCDCQAGYGGEACG) enclose the EGF-like 1 domain. Intrachain disulfides connect C155–C169, C163–C181, and C183–C192. An N-linked (GlcNAc...) asparagine glycan is attached at N205. FU repeat units lie at residues 208 to 256 (HLVC…GANC) and 268 to 315 (SYEC…EVCP). Residues 278 to 281 (CLGC) carry the CXXC motif. 4 cysteine pairs are disulfide-bonded: C278/C281, C309/C321, C314/C330, and C332/C343. In terms of domain architecture, EGF-like 2; calcium-binding spans 305–344 (DVDECETEVCPGENKQCENTEGGYRCICAEGYKQMEGICV). The chain crosses the membrane as a helical span at residues 363 to 383 (LVVLQQMFFGIIICALATLAA). Position 384 (K384) is a topological domain, cytoplasmic. Residues 385–405 (GDLVFTAIFIGAVAAMTGYWL) traverse the membrane as a helical segment. The Extracellular portion of the chain corresponds to 406 to 420 (SERSDRVLEGFIKGR).

Belongs to the CRELD family. In terms of tissue distribution, highly expressed in fetal lung, liver, kidney, adult heart, brain and skeletal muscle. Weakly expressed in placenta, fetal brain, and adult lung, liver, kidney and pancreas.

The protein localises to the membrane. The catalysed reaction is Catalyzes the rearrangement of -S-S- bonds in proteins.. In terms of biological role, protein disulfide isomerase. Promotes the localization of acetylcholine receptors (AChRs) to the plasma membrane. The chain is Protein disulfide isomerase CRELD1 (CRELD1) from Homo sapiens (Human).